Here is a 317-residue protein sequence, read N- to C-terminus: UV DNA damage endonuclease (317 aa).

The protein belongs to the uve1/UvsE family.

Component in a DNA repair pathway. Removal of UV LIGHT damaged nucleotides. Recognizes pyrimidine dimers and cleave a phosphodiester bond immediately 5' to the lesion. This chain is UV DNA damage endonuclease, found in Bacillus anthracis (strain A0248).